The primary structure comprises 457 residues: Protein translocase subunit SecY (457 aa).

Over 1–20 (MGVIDVLAAVGERFPAVRKP) the chain is Cytoplasmic. Residues 21–47 (ERKPTLYRRLAWTGVILVLYFIMSNIP) traverse the membrane as a helical segment. Over 48–59 (LYGIPPQNIGGQ) the chain is Extracellular. An intramembrane region (helical) is located at residues 60–67 (VDLQRIIF). A discontinuously helical membrane pass occupies residues 60-88 (VDLQRIIFASSAGTLMELGIGPIVTASLI). An intramembrane segment occupies 68 to 79 (ASSAGTLMELGI). Positions 80–88 (GPIVTASLI) form an intramembrane region, helical. Residues 89–109 (IQVLVGAKIIKLDLADPEGRR) lie on the Cytoplasmic side of the membrane. The chain crosses the membrane as a helical span at residues 110 to 134 (KFTSAQKVLALAFAALEAVAFTVGG). Topologically, residues 135-146 (RYWVGTAIEPGP) are extracellular. Residues 147-171 (LDYALVSLQLFLGALLVIYFDEVMQ) form a helical membrane-spanning segment. Residues 172–178 (KGWGIGS) are Cytoplasmic-facing. Residues 179-197 (AISLFILAGVAQGVVWSIF) traverse the membrane as a helical segment. The Extracellular segment spans residues 198–229 (GTIPGVAQDYGLVPAIISNPDLTLLARPNGFP). The chain crosses the membrane as a helical span at residues 230–251 (DLTGFFTTLAAIILLVYLQAMR). Residues 252–276 (VEIPITSERFKGIRSRVPLQFIYVT) are Cytoplasmic-facing. Residues 277-298 (NIPILLVGILVSDLLLVQRLLA) traverse the membrane as a helical segment. The Extracellular portion of the chain corresponds to 299–332 (DYLGVESRAYQIYSSIVYYLSPPRGVVQSIADPV). The chain crosses the membrane as a helical span at residues 333 to 352 (KTAVFIASWTVLSIVFGYMW). The Cytoplasmic portion of the chain corresponds to 353–395 (VEIAGLNPREQAERLIKGGLAIPGMRSDPRVLERVLRRYIYPL). The helical transmembrane segment at 396 to 414 (TFLSSLIVAALVIVADIFG) threads the bilayer. Over 415-417 (AYG) the chain is Extracellular. A helical membrane pass occupies residues 418–432 (TGTGLLLAVGIINQY). Residues 433-457 (YAMITRERALETYPLLRRILGEEVV) lie on the Cytoplasmic side of the membrane.

It belongs to the SecY/SEC61-alpha family. In terms of assembly, component of the Sec protein translocase complex. Heterotrimer consisting of alpha (SecY), beta (SecG) and gamma (SecE) subunits. The heterotrimers can form oligomers, although 1 heterotrimer is thought to be able to translocate proteins. Interacts with the ribosome. May interact with SecDF, and other proteins may be involved.

It localises to the cell membrane. Functionally, the central subunit of the protein translocation channel SecYEG. Consists of two halves formed by TMs 1-5 and 6-10. These two domains form a lateral gate at the front which open onto the bilayer between TMs 2 and 7, and are clamped together by SecE at the back. The channel is closed by both a pore ring composed of hydrophobic SecY resides and a short helix (helix 2A) on the extracellular side of the membrane which forms a plug. The plug probably moves laterally to allow the channel to open. The ring and the pore may move independently. The polypeptide is Protein translocase subunit SecY (Aeropyrum pernix (strain ATCC 700893 / DSM 11879 / JCM 9820 / NBRC 100138 / K1)).